A 447-amino-acid chain; its full sequence is ATP-dependent protease ATPase subunit HslU (447 aa).

ATP-binding positions include Ile-18, 60–65, Asp-259, Glu-325, and Arg-397; that span reads GVGKTE.

Belongs to the ClpX chaperone family. HslU subfamily. In terms of assembly, a double ring-shaped homohexamer of HslV is capped on each side by a ring-shaped HslU homohexamer. The assembly of the HslU/HslV complex is dependent on binding of ATP.

It localises to the cytoplasm. Its function is as follows. ATPase subunit of a proteasome-like degradation complex; this subunit has chaperone activity. The binding of ATP and its subsequent hydrolysis by HslU are essential for unfolding of protein substrates subsequently hydrolyzed by HslV. HslU recognizes the N-terminal part of its protein substrates and unfolds these before they are guided to HslV for hydrolysis. The polypeptide is ATP-dependent protease ATPase subunit HslU (Burkholderia cenocepacia (strain ATCC BAA-245 / DSM 16553 / LMG 16656 / NCTC 13227 / J2315 / CF5610) (Burkholderia cepacia (strain J2315))).